Consider the following 564-residue polypeptide: Dihydroxy-acid dehydratase (564 aa).

Cysteine 55 is a [2Fe-2S] cluster binding site. Position 87 (aspartate 87) interacts with Mg(2+). Residue cysteine 128 coordinates [2Fe-2S] cluster. The Mg(2+) site is built by aspartate 129 and lysine 130. Lysine 130 carries the post-translational modification N6-carboxylysine. Cysteine 200 lines the [2Fe-2S] cluster pocket. Position 452 (glutamate 452) interacts with Mg(2+). Serine 478 serves as the catalytic Proton acceptor.

It belongs to the IlvD/Edd family. Homodimer. [2Fe-2S] cluster is required as a cofactor. The cofactor is Mg(2+).

The enzyme catalyses (2R)-2,3-dihydroxy-3-methylbutanoate = 3-methyl-2-oxobutanoate + H2O. It carries out the reaction (2R,3R)-2,3-dihydroxy-3-methylpentanoate = (S)-3-methyl-2-oxopentanoate + H2O. The protein operates within amino-acid biosynthesis; L-isoleucine biosynthesis; L-isoleucine from 2-oxobutanoate: step 3/4. It participates in amino-acid biosynthesis; L-valine biosynthesis; L-valine from pyruvate: step 3/4. In terms of biological role, functions in the biosynthesis of branched-chain amino acids. Catalyzes the dehydration of (2R,3R)-2,3-dihydroxy-3-methylpentanoate (2,3-dihydroxy-3-methylvalerate) into 2-oxo-3-methylpentanoate (2-oxo-3-methylvalerate) and of (2R)-2,3-dihydroxy-3-methylbutanoate (2,3-dihydroxyisovalerate) into 2-oxo-3-methylbutanoate (2-oxoisovalerate), the penultimate precursor to L-isoleucine and L-valine, respectively. This is Dihydroxy-acid dehydratase from Polaromonas naphthalenivorans (strain CJ2).